We begin with the raw amino-acid sequence, 84 residues long: uncharacterized protein (84 aa).

A helical transmembrane segment spans residues 10–32 (AFSLAYYIIIHLLCLSYIYEIIH).

Its subcellular location is the membrane. This is an uncharacterized protein from Saccharomyces cerevisiae (strain ATCC 204508 / S288c) (Baker's yeast).